A 416-amino-acid chain; its full sequence is Cyclic dinucleotide synthase CdnG (416 aa).

Residue serine 72 coordinates GTP. Catalysis depends on residues aspartate 89, aspartate 91, and aspartate 140. Aspartate 91 provides a ligand contact to GTP. Aspartate 91 provides a ligand contact to Mg(2+). The segment at 145 to 167 (RRRAPKEKEGEIPHAKKGTRSDP) is disordered. The segment covering 150–167 (KEKEGEIPHAKKGTRSDP) has biased composition (basic and acidic residues). Residues lysine 236, serine 253, glutamate 305, arginine 306, and aspartate 309 each contribute to the GTP site.

The protein belongs to the CD-NTase family. G10 subfamily. Requires Mg(2+) as cofactor.

It carries out the reaction UTP + GTP = 3',3'-cGMP-UMP + 2 diphosphate. The enzyme catalyses GTP + ATP = 3',3'-cGAMP + 2 diphosphate. The catalysed reaction is 2 ATP = 3',3'-c-di-AMP + 2 diphosphate. Cyclic nucleotide synthase (second messenger synthase) of a CBASS antivirus system. CBASS (cyclic oligonucleotide-based antiphage signaling system) provides immunity against bacteriophage. The CD-NTase protein synthesizes cyclic nucleotides in response to infection; these serve as specific second messenger signals. The signals activate a diverse range of effectors, leading to bacterial cell death and thus abortive phage infection. A type II-short CBASS system. Functionally, cyclic dinucleotide synthase that catalyzes the synthesis of predominantly 3'3'-cGMP-UMP, followed by 3'3'-cGAMP and c-di-AMP in a reaction mixture of ATP, CTP, GTP and UTP. The cyclic nucleotide products are second messengers that activate the CBASS Cap5 effector nuclease, leading to DNA degradation and probably cell death. Cyclic nucleotides do not activate the effector equally; reactions with ATP/GTP, ATP/UTP and ATP alone activate Cap5, whereas reaction with GTP/UTP (the major in vitro product) do not. This is Cyclic dinucleotide synthase CdnG from Bradyrhizobium diazoefficiens (strain JCM 10833 / BCRC 13528 / IAM 13628 / NBRC 14792 / USDA 110).